Reading from the N-terminus, the 475-residue chain is 3-isopropylmalate dehydratase large subunit (475 aa).

Cys-353, Cys-414, and Cys-417 together coordinate [4Fe-4S] cluster.

Belongs to the aconitase/IPM isomerase family. LeuC type 1 subfamily. In terms of assembly, heterodimer of LeuC and LeuD. The cofactor is [4Fe-4S] cluster.

The catalysed reaction is (2R,3S)-3-isopropylmalate = (2S)-2-isopropylmalate. Its pathway is amino-acid biosynthesis; L-leucine biosynthesis; L-leucine from 3-methyl-2-oxobutanoate: step 2/4. In terms of biological role, catalyzes the isomerization between 2-isopropylmalate and 3-isopropylmalate, via the formation of 2-isopropylmaleate. This chain is 3-isopropylmalate dehydratase large subunit, found in Stutzerimonas stutzeri (strain A1501) (Pseudomonas stutzeri).